Reading from the N-terminus, the 489-residue chain is GTPase Der (489 aa).

EngA-type G domains are found at residues 30–199 and 227–403; these read PVVS…KDKP and FRLA…SRSH. GTP-binding positions include 36–43, 85–89, 151–154, 233–240, 280–284, and 345–348; these read GRQNVGKS, DTPGL, NKAD, GKPNSGKS, DTAGI, and NKWD. The 85-residue stretch at 404-488 folds into the KH-like domain; sequence RKVSTSELNK…PIRLEFRSDR (85 aa).

It belongs to the TRAFAC class TrmE-Era-EngA-EngB-Septin-like GTPase superfamily. EngA (Der) GTPase family. As to quaternary structure, associates with the 50S ribosomal subunit.

GTPase that plays an essential role in the late steps of ribosome biogenesis. In Leptospira interrogans serogroup Icterohaemorrhagiae serovar Lai (strain 56601), this protein is GTPase Der.